The following is a 239-amino-acid chain: Ribonuclease PH (239 aa).

Residues Arg87 and Gly125–Arg127 contribute to the phosphate site.

It belongs to the RNase PH family. As to quaternary structure, homohexameric ring arranged as a trimer of dimers.

The enzyme catalyses tRNA(n+1) + phosphate = tRNA(n) + a ribonucleoside 5'-diphosphate. Phosphorolytic 3'-5' exoribonuclease that plays an important role in tRNA 3'-end maturation. Removes nucleotide residues following the 3'-CCA terminus of tRNAs; can also add nucleotides to the ends of RNA molecules by using nucleoside diphosphates as substrates, but this may not be physiologically important. Probably plays a role in initiation of 16S rRNA degradation (leading to ribosome degradation) during starvation. The sequence is that of Ribonuclease PH from Pseudomonas aeruginosa (strain LESB58).